The chain runs to 123 residues: Large ribosomal subunit protein uL14 (123 aa).

It belongs to the universal ribosomal protein uL14 family. In terms of assembly, part of the 50S ribosomal subunit. Forms a cluster with proteins L3 and L19. In the 70S ribosome, L14 and L19 interact and together make contacts with the 16S rRNA in bridges B5 and B8.

In terms of biological role, binds to 23S rRNA. Forms part of two intersubunit bridges in the 70S ribosome. The sequence is that of Large ribosomal subunit protein uL14 from Proteus mirabilis (strain HI4320).